Reading from the N-terminus, the 189-residue chain is Putative manganese efflux pump MntP (189 aa).

6 helical membrane passes run 2–22 (SLTELILLAIGLSMDASAVSI), 36–56 (ILQMAVMFAVFQGIMPLIGYY), 71–91 (WIAFILLVIIGGKMIHESITA), 106–126 (LLLVQAVATSIDALAVGVSLS), 132–152 (ILYSITIIGIVTFICCTAAIL), and 167–187 (IVGGLILVGIGVKIFVQHMFF).

The protein belongs to the MntP (TC 9.B.29) family.

The protein resides in the cell membrane. Probably functions as a manganese efflux pump. This is Putative manganese efflux pump MntP from Ruminiclostridium cellulolyticum (strain ATCC 35319 / DSM 5812 / JCM 6584 / H10) (Clostridium cellulolyticum).